A 146-amino-acid polypeptide reads, in one-letter code: Hemoglobin subunit beta-1 (146 aa).

The Globin domain occupies 2–146; sequence HWTAEEKSAI…VAHALAHRYH (145 aa). Residues histidine 63 and histidine 92 each contribute to the heme b site.

The protein belongs to the globin family. Heterotetramer of two alpha chains and two beta chains. Red blood cells.

Functionally, involved in oxygen transport from the lung to the various peripheral tissues. This is Hemoglobin subunit beta-1 from Drymarchon melanurus erebennus (Texas indigo snake).